A 357-amino-acid polypeptide reads, in one-letter code: MNRETFDIQPIGRFYGSNTAIRRPREIACFSYDDQHKFHLGDSSLRYYYPPQLPADLNRGFDTFQKLDDAADEHIDALLDTIAAMEKETGKRCEADIITWRGMMTKILTAPFDDMNGFEMNATCFQGTMCKQLQRQQRMPPGMASQDLMAYWGYKFETISVLDKTWDEASREEIEGRENLVVNNNAQYCSVVRTGIGRTKLVLGGEVDAIWDSKPERKEDPINWVELKTSAEIRKDWDMVKFERKLLKFWAQSFLLGVPKIVVGFRDQGGILRRLEELETANIPNRVRKSGRGTWDGNICINFAATFLEWLKSVIKEGGTWRLRKAEKSSVIEVYQVEESGTGDILSQAFLSWRSTT.

Residue glutamate 157 participates in a divalent metal cation binding. Substrate is bound by residues cysteine 189 and glutamate 206. Residues aspartate 208, glutamate 226, and leucine 227 each coordinate a divalent metal cation. Residues lysine 228 and glutamine 252 each contribute to the substrate site.

It belongs to the DXO/Dom3Z family. As to quaternary structure, interacts with rat1; the interaction is direct, stabilizes rat1 protein structure and stimulates its exoribonuclease activity. The interaction also stimulates rai1 pyrophosphohydrolase activity, probably by recruiting it to mRNA substrates. A divalent metal cation serves as cofactor.

It is found in the nucleus. The catalysed reaction is a 5'-end NAD(+)-phospho-ribonucleoside in mRNA + H2O = a 5'-end phospho-ribonucleoside in mRNA + NAD(+) + H(+). It carries out the reaction a 5'-end (N(7)-methyl 5'-triphosphoguanosine)-ribonucleoside-ribonucleotide in mRNA + H2O = a (N(7)-methyl 5'-triphosphoguanosine)-nucleoside + a 5'-end phospho-ribonucleoside in mRNA + H(+). The enzyme catalyses a 5'-end triphospho-ribonucleoside in mRNA + H2O = a 5'-end phospho-ribonucleoside in mRNA + diphosphate + H(+). Decapping enzyme for NAD-capped RNAs: specifically hydrolyzes the nicotinamide adenine dinucleotide (NAD) cap from a subset of RNAs by removing the entire NAD moiety from the 5'-end of an NAD-capped RNA. The NAD-cap is present at the 5'-end of some RNAs and snoRNAs. In contrast to the canonical 5'-end N7 methylguanosine (m7G) cap, the NAD cap promotes mRNA decay. Also acts as a non-canonical decapping enzyme that removes the entire cap structure of m7G capped or incompletely capped RNAs. Has decapping activity toward incomplete 5'-end m7G cap mRNAs such as unmethylated 5'-end-capped RNA (cap0), while it has no activity toward 2'-O-ribose methylated m7G cap (cap1). Also possesses RNA 5'-pyrophosphohydrolase activity by hydrolyzing the 5'-end triphosphate to release pyrophosphates. Stimulates exoribonuclease activity of Rat1, allowing it to degrade RNAs with stable secondary structure more effectively. This chain is Decapping nuclease RAI1 (rai1), found in Emericella nidulans (strain FGSC A4 / ATCC 38163 / CBS 112.46 / NRRL 194 / M139) (Aspergillus nidulans).